The sequence spans 296 residues: MSNQDLKGSAVALVTPFREDFSIDTDALKQLVHFHAEAGTDIIIPCGTTGESPTLNPEEQADIIRIVRDEAKGKMLVAAGAGTNSTRSAVTLAKNAEDAGAEAILSVAPYYSKPSQEGIYQHYRHIAEAVSVPIIIYNVPGRTGCNVSAETILRLAGDFSNIAAVKEASDNFTQIADLLDGRPEHFSVLTGEDTLILPFMAMGGDGVISVAANQVPAAVKQLVDSAAAGNLEEARRISRTYRNLFRLNFIESNPAPIKCALAMMGMIKEVYRLPMTPVSEESRRQLSLEMSALGLI.

Threonine 49 provides a ligand contact to pyruvate. Catalysis depends on tyrosine 137, which acts as the Proton donor/acceptor. Lysine 166 acts as the Schiff-base intermediate with substrate in catalysis. Residue isoleucine 208 coordinates pyruvate.

This sequence belongs to the DapA family. Homotetramer; dimer of dimers.

It is found in the cytoplasm. The enzyme catalyses L-aspartate 4-semialdehyde + pyruvate = (2S,4S)-4-hydroxy-2,3,4,5-tetrahydrodipicolinate + H2O + H(+). It functions in the pathway amino-acid biosynthesis; L-lysine biosynthesis via DAP pathway; (S)-tetrahydrodipicolinate from L-aspartate: step 3/4. Functionally, catalyzes the condensation of (S)-aspartate-beta-semialdehyde [(S)-ASA] and pyruvate to 4-hydroxy-tetrahydrodipicolinate (HTPA). This Chlorobium phaeovibrioides (strain DSM 265 / 1930) (Prosthecochloris vibrioformis (strain DSM 265)) protein is 4-hydroxy-tetrahydrodipicolinate synthase.